A 450-amino-acid polypeptide reads, in one-letter code: Protein phosphatase 1F (450 aa).

In terms of domain architecture, PPM-type phosphatase spans 152–409 (LVSIHAIRNT…DNITVMVVFL (258 aa)). D194, G195, D356, and D400 together coordinate Mn(2+). Residues 420 to 450 (GQGAGGAQADVGSQDLSTGLSELEINTSQRS) are disordered. The segment covering 433-450 (QDLSTGLSELEINTSQRS) has biased composition (polar residues). At S450 the chain carries Phosphoserine.

The protein belongs to the PP2C family. Associates with FEM1B. Mg(2+) is required as a cofactor. The cofactor is Mn(2+).

It carries out the reaction O-phospho-L-seryl-[protein] + H2O = L-seryl-[protein] + phosphate. The enzyme catalyses O-phospho-L-threonyl-[protein] + H2O = L-threonyl-[protein] + phosphate. Its function is as follows. Dephosphorylates and concomitantly deactivates CaM-kinase II activated upon autophosphorylation, and CaM-kinases IV and I activated upon phosphorylation by CaM-kinase kinase. Promotes apoptosis. The chain is Protein phosphatase 1F (Ppm1f) from Rattus norvegicus (Rat).